Here is a 414-residue protein sequence, read N- to C-terminus: Putative ankyrin repeat protein BB_B28 (414 aa).

ANK repeat units follow at residues 326–355 (NGNP…NINL) and 359–389 (NSQT…NPNI).

This chain is Putative ankyrin repeat protein BB_B28, found in Borreliella burgdorferi (strain ATCC 35210 / DSM 4680 / CIP 102532 / B31) (Borrelia burgdorferi).